Consider the following 514-residue polypeptide: Maturase K (514 aa).

It belongs to the intron maturase 2 family. MatK subfamily.

It is found in the plastid. The protein localises to the chloroplast. Functionally, usually encoded in the trnK tRNA gene intron. Probably assists in splicing its own and other chloroplast group II introns. This Lepidozamia peroffskyana (Peroffsky's lepidozamia) protein is Maturase K.